Here is a 90-residue protein sequence, read N- to C-terminus: DNA-binding protein HU-alpha (90 aa).

It belongs to the bacterial histone-like protein family. As to quaternary structure, heterodimer of an alpha and a beta chain.

In terms of biological role, histone-like DNA-binding protein which is capable of wrapping DNA to stabilize it, and thus to prevent its denaturation under extreme environmental conditions. The chain is DNA-binding protein HU-alpha (hupA) from Salmonella typhi.